The chain runs to 129 residues: Small ribosomal subunit protein uS11 (129 aa).

It belongs to the universal ribosomal protein uS11 family. Part of the 30S ribosomal subunit. Interacts with proteins S7 and S18. Binds to IF-3.

Functionally, located on the platform of the 30S subunit, it bridges several disparate RNA helices of the 16S rRNA. Forms part of the Shine-Dalgarno cleft in the 70S ribosome. This Pectobacterium atrosepticum (strain SCRI 1043 / ATCC BAA-672) (Erwinia carotovora subsp. atroseptica) protein is Small ribosomal subunit protein uS11.